A 73-amino-acid polypeptide reads, in one-letter code: Putative sulfur carrier protein AF_0556 (73 aa).

Cysteine 11 functions as the Cysteine persulfide intermediate in the catalytic mechanism.

It belongs to the sulfur carrier protein TusA family.

This chain is Putative sulfur carrier protein AF_0556, found in Archaeoglobus fulgidus (strain ATCC 49558 / DSM 4304 / JCM 9628 / NBRC 100126 / VC-16).